A 196-amino-acid polypeptide reads, in one-letter code: uncharacterized protein (196 aa).

The helical transmembrane segment at 11–31 (ICGFLLVILTIGGVLGGVYLV) threads the bilayer.

It is found in the membrane. This is an uncharacterized protein from Mycoplasma genitalium (strain ATCC 33530 / DSM 19775 / NCTC 10195 / G37) (Mycoplasmoides genitalium).